Consider the following 207-residue polypeptide: Ribosomal RNA small subunit methyltransferase G (207 aa).

Residues G73, L78, 124–125, and R139 each bind S-adenosyl-L-methionine; that span reads VE.

This sequence belongs to the methyltransferase superfamily. RNA methyltransferase RsmG family.

The protein localises to the cytoplasm. It carries out the reaction guanosine(527) in 16S rRNA + S-adenosyl-L-methionine = N(7)-methylguanosine(527) in 16S rRNA + S-adenosyl-L-homocysteine. In terms of biological role, specifically methylates the N7 position of guanine in position 527 of 16S rRNA. This is Ribosomal RNA small subunit methyltransferase G from Salmonella schwarzengrund (strain CVM19633).